The sequence spans 102 residues: Keratin-associated protein 25-1 (102 aa).

Belongs to the PMG family. In terms of assembly, interacts with hair keratins.

In the hair cortex, hair keratin intermediate filaments are embedded in an interfilamentous matrix, consisting of hair keratin-associated proteins (KRTAP), which are essential for the formation of a rigid and resistant hair shaft through their extensive disulfide bond cross-linking with abundant cysteine residues of hair keratins. The matrix proteins include the high-sulfur and high-glycine-tyrosine keratins. The polypeptide is Keratin-associated protein 25-1 (KRTAP25-1) (Homo sapiens (Human)).